Here is a 363-residue protein sequence, read N- to C-terminus: Ataxin-3 (363 aa).

The Josephin domain maps to 1 to 180 (MESIFHERQE…DCEADQLLQM (180 aa)). C14 serves as the catalytic Nucleophile. H119 functions as the Proton acceptor in the catalytic mechanism. N134 is a catalytic residue. Residues 192 to 209 (IGEETAQSRDQRLPRSDV) show a composition bias toward basic and acidic residues. The interval 192–212 (IGEETAQSRDQRLPRSDVDQA) is disordered. 3 consecutive UIM domains span residues 227 to 246 (EDEE…IDME), 247 to 266 (DEEA…SRQS), and 337 to 356 (SEED…ARNH). Residues 260–290 (MQGSRQSEFSNSLPQNASQPPHTSQTDSLSS) are compositionally biased toward polar residues. The interval 260–363 (MQGSRQSEFS…RNHLSTEEKK (104 aa)) is disordered. Residues 353–363 (ARNHLSTEEKK) are compositionally biased toward basic and acidic residues.

In terms of tissue distribution, widely expressed.

The protein resides in the nucleus matrix. Its subcellular location is the nucleus. It localises to the lysosome membrane. It carries out the reaction Thiol-dependent hydrolysis of ester, thioester, amide, peptide and isopeptide bonds formed by the C-terminal Gly of ubiquitin (a 76-residue protein attached to proteins as an intracellular targeting signal).. Deubiquitinating enzyme involved in protein homeostasis maintenance, transcription, cytoskeleton regulation, myogenesis and degradation of misfolded chaperone substrates. Binds long polyubiquitin chains and trims them, while it has weak or no activity against chains of 4 or less ubiquitins. Involved in degradation of misfolded chaperone substrates via its interaction with STUB1/CHIP: recruited to monoubiquitinated STUB1/CHIP, and restricts the length of ubiquitin chain attached to STUB1/CHIP substrates and preventing further chain extension. Interacts with key regulators of transcription and represses transcription: acts as a histone-binding protein that regulates transcription. Acts as a negative regulator of mTORC1 signaling in response to amino acid deprivation by mediating deubiquitination of RHEB, thereby promoting RHEB inactivation by the TSC-TBC complex. Regulates autophagy via the deubiquitination of 'Lys-402' of BECN1 leading to the stabilization of BECN1. The protein is Ataxin-3 (ATXN3) of Gallus gallus (Chicken).